We begin with the raw amino-acid sequence, 141 residues long: ATP synthase epsilon chain (141 aa).

This sequence belongs to the ATPase epsilon chain family. In terms of assembly, F-type ATPases have 2 components, CF(1) - the catalytic core - and CF(0) - the membrane proton channel. CF(1) has five subunits: alpha(3), beta(3), gamma(1), delta(1), epsilon(1). CF(0) has three main subunits: a, b and c.

The protein resides in the cell inner membrane. Produces ATP from ADP in the presence of a proton gradient across the membrane. The chain is ATP synthase epsilon chain from Burkholderia multivorans (strain ATCC 17616 / 249).